A 180-amino-acid chain; its full sequence is Progesterone receptor (180 aa).

An NR C4-type zinc finger spans residues 1–11 (KNCPACRLRKC). Positions 1–16 (KNCPACRLRKCCQAGM) form a DNA-binding region, nuclear receptor. Ser60 is subject to Phosphoserine. An NR LBD domain is found at 63 to 180 (QEIQLFPPLI…QRMKESSFYS (118 aa)). The segment at 71–180 (LINLLLSIEP…QRMKESSFYS (110 aa)) is AF2; mediates transcriptional activation. Arg150 is a binding site for progesterone.

It belongs to the nuclear hormone receptor family. NR3 subfamily. As to quaternary structure, interacts with SMARD1 and UNC45A. Interacts with CUEDC2; the interaction promotes ubiquitination, decreases sumoylation, and represses transcriptional activity. Interacts with PIAS3; the interaction promotes sumoylation of PR in a hormone-dependent manner, inhibits DNA-binding, and alters nuclear export. Interacts with SP1; the interaction requires ligand-induced phosphorylation by ERK1/2-MAPK. Interacts with PRMT2. Interacts with NCOA2 and NCOA1. Interacts with KLF9. Interacts with GTF2B. In terms of processing, phosphorylated on multiple serine sites. Several of these sites are hormone-dependent. Sumoylation is hormone-dependent and represses transcriptional activity. Sumoylation on all three sites is enhanced by PIAS3. Desumoylated by SENP1. Sumoylation is repressed by ubiquitination and modulated by phosphorylation. Post-translationally, ubiquitination is hormone-dependent and represses sumoylation. In terms of processing, palmitoylated by ZDHHC7 and ZDHHC21. Palmitoylation is required for plasma membrane targeting and for rapid intracellular signaling via ERK and AKT kinases and cAMP generation.

It is found in the nucleus. The protein resides in the cytoplasm. The steroid hormones and their receptors are involved in the regulation of eukaryotic gene expression and affect cellular proliferation and differentiation in target tissues. Transcriptional activator of several progesteron-dependent promoters in a variety of cell types. Involved in activation of SRC-dependent MAPK signaling on hormone stimulation. In Notamacropus eugenii (Tammar wallaby), this protein is Progesterone receptor (PGR).